A 257-amino-acid chain; its full sequence is Serine/arginine-rich splicing factor 1 (257 aa).

Position 2 is an N-acetylserine (S2). Residues 16–91 (CRIYVGNLPP…YRLRVEFPRS (76 aa)) enclose the RRM 1 domain. A disordered region spans residues 88 to 116 (FPRSGRGTGRGGGGGGGGGAPRGRYGPPS). Residues 93 to 108 (RGTGRGGGGGGGGGAP) show a composition bias toward gly residues. The RRM 2 domain occupies 121-195 (YRVIVSGLPP…ETAYIRVKVD (75 aa)).

The protein localises to the cytoplasm. The protein resides in the nucleus speckle. May play a role in preventing exon skipping, ensuring the accuracy of splicing and regulating alternative splicing. The sequence is that of Serine/arginine-rich splicing factor 1 (SRSF1) from Gallus gallus (Chicken).